A 236-amino-acid polypeptide reads, in one-letter code: Uridylate kinase (236 aa).

ATP is bound at residue 12–15 (KLSG). The segment at 20 to 25 (GEKGFG) is involved in allosteric activation by GTP. A UMP-binding site is contributed by Gly54. The ATP site is built by Gly55 and Arg59. UMP is bound by residues Asp72 and 133–140 (TGNPYFST). ATP contacts are provided by Asn161, Tyr166, and Asp169.

It belongs to the UMP kinase family. In terms of assembly, homohexamer.

It localises to the cytoplasm. The enzyme catalyses UMP + ATP = UDP + ADP. It participates in pyrimidine metabolism; CTP biosynthesis via de novo pathway; UDP from UMP (UMPK route): step 1/1. Allosterically activated by GTP. Inhibited by UTP. Its function is as follows. Catalyzes the reversible phosphorylation of UMP to UDP. The chain is Uridylate kinase from Alkaliphilus oremlandii (strain OhILAs) (Clostridium oremlandii (strain OhILAs)).